We begin with the raw amino-acid sequence, 779 residues long: Subtilisin-like protease SBT3.18 (779 aa).

The N-terminal stretch at 1 to 21 is a signal peptide; it reads MYFWVMFFTLMIKVKLYITNG. The propeptide at 22 to 109 is activation peptide; sequence DIFQNRPTVY…VFKSKSLKLH (88 aa). Residues 30 to 109 form the Inhibitor I9 domain; the sequence is VYVVYLGANR…VFKSKSLKLH (80 aa). N84 carries N-linked (GlcNAc...) asparagine glycosylation. Residues 113-621 enclose the Peptidase S8 domain; it reads SWDFLGLAVD…AGHINPLKAM (509 aa). Residues D144 and H221 each act as charge relay system in the active site. N236 and N406 each carry an N-linked (GlcNAc...) asparagine glycan. S553 (charge relay system) is an active-site residue.

The protein belongs to the peptidase S8 family.

The protein localises to the secreted. This chain is Subtilisin-like protease SBT3.18, found in Arabidopsis thaliana (Mouse-ear cress).